The following is a 545-amino-acid chain: MKFSSLAAATALVAGSVVAADLDPIVIKVGVRSALIPGWPKGGSKFFYKSNGTEFFMKGIAYQQEFSTNGTSSDKNNYQDPLADVESCRRDIPLMQQLQTNTIRVYAIDPKKDHKQCMKLLQDAGIYVVADLSEPSTSIIRDDPKWDDVLYTRYTSVVDELAQYSNVIGFFAGNEVSNNSTNTDASAFVKAAVRDMKAYIKQKNYRSMGVGYATNDDAEIRKDMTAYFNCNKQEESIDFWGYNIYSWCGDSSYTESGYDKVVEEFKTFNVPVFFAEYGCNEVQPRKFTEVQALYGDKMTPVVSGGIVYMYFQEENDYGLVKIEGGKPKKLPDFNSLQKQISKIKPSGVQMDSYKPTNTALSTCPKSSTWKASVKLPPTPNKDLCSCMVKSLSCVAKPSVTGKELGKLFGTVCGSDKDACKGITADATSGTYGAYSMCSPSEKLSFAFNQYYQHQSAKGNGANACDFGGAATAQKSEKPSGSCANLVDQAGQDGTGSVTSAPGSGGNKPDQGAASTISAPSVNLGIVKLGAYIFCAVLAGAGMILI.

Residues 1–19 form the signal peptide; that stretch reads MKFSSLAAATALVAGSVVA. N-linked (GlcNAc...) asparagine glycosylation is found at Asn51 and Asn69. Cys88 and Cys117 are disulfide-bonded. Residues Tyr106, 133–141, Asn174, and Glu175 each bind (1,3-beta-D-glucosyl)n; that span reads SEPSTSIIR. Glu175 functions as the Proton donor in the catalytic mechanism. Asn179 is a glycosylation site (N-linked (GlcNAc...) asparagine). Positions 216 and 221 each coordinate (1,3-beta-D-glucosyl)n. 5 disulfides stabilise this stretch: Cys230-Cys363, Cys248-Cys279, Cys384-Cys437, Cys393-Cys464, and Cys412-Cys419. Glu276 serves as the catalytic Nucleophile. Tyr308 contributes to the (1,3-beta-D-glucosyl)n binding site. The tract at residues 493–513 is disordered; the sequence is GTGSVTSAPGSGGNKPDQGAA. The GPI-anchor amidated alanine moiety is linked to residue Ala512. Positions 513–545 are cleaved as a propeptide — removed in mature form; the sequence is ASTISAPSVNLGIVKLGAYIFCAVLAGAGMILI.

Belongs to the glycosyl hydrolase 72 family. The GPI-anchor is attached to the protein in the endoplasmic reticulum and serves to target the protein to the cell surface. There, the glucosamine-inositol phospholipid moiety is cleaved off and the GPI-modified mannoprotein is covalently attached via its lipidless GPI glycan remnant to the 1,6-beta-glucan of the outer cell wall layer.

It is found in the secreted. It localises to the cell membrane. The protein resides in the cell wall. In terms of biological role, splits internally a 1,3-beta-glucan molecule and transfers the newly generated reducing end (the donor) to the non-reducing end of another 1,3-beta-glucan molecule (the acceptor) forming a 1,3-beta linkage, resulting in the elongation of 1,3-beta-glucan chains in the cell wall. Involved in cell wall biosynthesis and morphogenesis. The protein is 1,3-beta-glucanosyltransferase ARB_07487 of Arthroderma benhamiae (strain ATCC MYA-4681 / CBS 112371) (Trichophyton mentagrophytes).